A 92-amino-acid chain; its full sequence is MPRSLKKGPFVDHHLMKKVLEQNEKGTKNVIKTWSRRSMVVPEMIGHTIAVHDGRKHVPVFITEAMIGHKLGEFAPTRTFRSHVKEDRRSRR.

Belongs to the universal ribosomal protein uS19 family.

Functionally, protein S19 forms a complex with S13 that binds strongly to the 16S ribosomal RNA. The chain is Small ribosomal subunit protein uS19 from Thermobifida fusca (strain YX).